A 389-amino-acid polypeptide reads, in one-letter code: MAAELIKEYVPIVSEYAPGLIEGLLSWKGAVGLVAATGIGYVLIIQRLQNTSATKNLWGLTGGGVQAKDVSKVADVYDKSYGKEGDGSLTLHHLDKKESVAVVDTFYNLVTDGYEACWDTSFHFSPRPRFTNFRTAQILHEARIGYMARIQPGFKVLDCGCGIGNPGRTVAALTGAHVTGITINEYQVKRALYHTKKAGLTGLFTPVQGDFTDMPFADKTFDAAFAIEATCHAPKLEQVYGEIFRVLKPGAFFAVYEAVTTDKFDPANKRHVEIINSLVYGNGIPDMRTWKQAEEAGKNVGFKLCCAFDAGAASPVALPWWERVKDMINWGVVKYTKAACLALDSLRLLPKDYWKVANMVGDSLPDLVESGETGIFTPMYLLVWQKPEE.

The chain crosses the membrane as a helical span at residues 25-45 (LSWKGAVGLVAATGIGYVLII).

The protein belongs to the class I-like SAM-binding methyltransferase superfamily. Erg6/SMT family.

It localises to the microsome membrane. Functionally, unable to convert squalene, botryococcene, cycloartenol, zymosterol or lanosterol to mono-, di-, tri- or tetramethylated derivatives. The sequence is that of Sterol methyltransferase-like 2 (SMT-2) from Botryococcus braunii (Green alga).